Consider the following 225-residue polypeptide: NAD(P)H-quinone oxidoreductase subunit K, chloroplastic (225 aa).

[4Fe-4S] cluster-binding residues include cysteine 43, cysteine 44, cysteine 108, and cysteine 139.

Belongs to the complex I 20 kDa subunit family. As to quaternary structure, NDH is composed of at least 16 different subunits, 5 of which are encoded in the nucleus. [4Fe-4S] cluster serves as cofactor.

The protein localises to the plastid. It localises to the chloroplast thylakoid membrane. It catalyses the reaction a plastoquinone + NADH + (n+1) H(+)(in) = a plastoquinol + NAD(+) + n H(+)(out). The enzyme catalyses a plastoquinone + NADPH + (n+1) H(+)(in) = a plastoquinol + NADP(+) + n H(+)(out). Its function is as follows. NDH shuttles electrons from NAD(P)H:plastoquinone, via FMN and iron-sulfur (Fe-S) centers, to quinones in the photosynthetic chain and possibly in a chloroplast respiratory chain. The immediate electron acceptor for the enzyme in this species is believed to be plastoquinone. Couples the redox reaction to proton translocation, and thus conserves the redox energy in a proton gradient. The chain is NAD(P)H-quinone oxidoreductase subunit K, chloroplastic from Vitis vinifera (Grape).